Here is a 483-residue protein sequence, read N- to C-terminus: WAS/WASL-interacting protein family member 3 (483 aa).

Over residues 1–29 (MPVPPPPPPPLPPPPPPLGAPPPPPPSAP) the composition is skewed to pro residues. A disordered region spans residues 1–414 (MPVPPPPPPP…GGQLRNGSLH (414 aa)). 3 short sequence motifs (profilin-binding motif) span residues 3–8 (VPPPPP), 11–16 (LPPPPP), and 20–25 (APPPPP). A WH2 domain is found at 45 to 62 (GRSALLADIQQGTRLRKV). The residue at position 46 (Arg-46) is an Asymmetric dimethylarginine. Residues 58-61 (RLRK) carry the RLRK motif. Polar residues-rich tracts occupy residues 63 to 78 (TQIN…SSKG) and 87 to 96 (ANTRGASTPP). Ser-149 carries the post-translational modification Phosphoserine. The span at 166–192 (PPRPNVPAPPPPTPPPPPPPLPPPLPS) shows a compositional bias: pro residues. Residue Ser-202 is modified to Phosphoserine. 2 stretches are compositionally biased toward pro residues: residues 215–239 (VAPP…PLPP) and 256–271 (HLPP…PPCG). Residues 277 to 288 (AEPASPAQDAQE) show a composition bias toward low complexity. A compositionally biased stretch (pro residues) spans 289–298 (PPAPPPPLPP). Composition is skewed to low complexity over residues 299-308 (YASCSPRASL) and 331-345 (PSFQ…AQAL). A Phosphoserine modification is found at Ser-383. A compositionally biased stretch (low complexity) spans 393–404 (QQATAWTPTQQP). Residues 424-448 (TFHSVEDFPPPDEYKPCQKIYPSKI) carry the WASP-binding motif motif. The segment at 461 to 483 (EAVGQSSDDIKGRNSQLSLKTLR) is disordered. The segment covering 473–483 (RNSQLSLKTLR) has biased composition (polar residues).

The protein belongs to the verprolin family. In terms of assembly, interacts with WASL, and monomeric and filamentous actin.

The protein localises to the cytoplasm. Functionally, may be a regulator of cytoskeletal organization. May have a role in spermatogenesis. This Homo sapiens (Human) protein is WAS/WASL-interacting protein family member 3 (WIPF3).